Consider the following 626-residue polypeptide: Probable potassium transport system protein Kup (626 aa).

12 helical membrane passes run 13–33, 53–73, 102–122, 138–158, 169–189, 207–227, 248–268, 277–297, 338–358, 367–387, 399–419, and 421–441; these read VALM…SPLY, VLSI…VLLI, FFVV…MITP, HTLD…LFAI, LFGP…GWQV, FVFE…LALT, WFSM…ALLL, PFFL…ATVA, IYLP…VITF, AYGF…FAVL, WMLV…ANIF, and IHEG…LMMT.

This sequence belongs to the HAK/KUP transporter (TC 2.A.72) family.

It is found in the cell inner membrane. The enzyme catalyses K(+)(in) + H(+)(in) = K(+)(out) + H(+)(out). Its function is as follows. Transport of potassium into the cell. Likely operates as a K(+):H(+) symporter. This chain is Probable potassium transport system protein Kup, found in Bordetella avium (strain 197N).